Here is a 355-residue protein sequence, read N- to C-terminus: Protein ECERIFERUM 16 (355 aa).

2 disordered regions span residues 1 to 60 and 296 to 315; these read MDSK…LPSN and HSSTEQFNKPGNPSDQKIHM. Positions 7-28 are enriched in basic residues; the sequence is AKSKRAHTLHHSKKSHSVHKPK. 2 stretches are compositionally biased toward polar residues: residues 41–53 and 296–310; these read QGNQTKSPVQSRR and HSSTEQFNKPGNPSD.

In terms of assembly, interacts with RST1. Expressed in taproots, lateral roots, root tips, leaf veins, cauline leaves, inflorescences, flowers, and siliques.

Its subcellular location is the cytoplasm. The protein resides in the cytosol. The protein localises to the endoplasmic reticulum. Functionally, together with RST1, acts as a cofactor of the cytoplasmic exosome and connects the cytosolic RNA exosome to the SKI complex. Acts as a post-transcriptional gene silencing (PTGS) suppressor. CER16/RIPR can, like RST1 suppress the production of small interfering RNAs (siRNAs) from the CER3 locus, which is involved in cuticule membrane and wax production, and in the typhine and sporopollenin biosynthesis of pollen. This Arabidopsis thaliana (Mouse-ear cress) protein is Protein ECERIFERUM 16.